The primary structure comprises 324 residues: HTH-type transcriptional regulator CysB (324 aa).

Residues 1 to 59 (MKLQQLRYIVEVVNHNLNVSSTAEGLYTSQPGISKQVRMLEDELGIQIFSRSGKHLTQV) enclose the HTH lysR-type domain. Residues 19–38 (VSSTAEGLYTSQPGISKQVR) constitute a DNA-binding region (H-T-H motif).

This sequence belongs to the LysR transcriptional regulatory family. As to quaternary structure, homotetramer.

Its subcellular location is the cytoplasm. Its function is as follows. This protein is a positive regulator of gene expression for the cysteine regulon. The inducer for CysB is N-acetylserine. The sequence is that of HTH-type transcriptional regulator CysB (cysB) from Escherichia coli O157:H7.